Reading from the N-terminus, the 350-residue chain is tRNA uridine(34) hydroxylase (350 aa).

One can recognise a Rhodanese domain in the interval 146–240; the sequence is DDPDALFIDM…YARKAREQGL (95 aa). C200 functions as the Cysteine persulfide intermediate in the catalytic mechanism.

This sequence belongs to the TrhO family.

It carries out the reaction uridine(34) in tRNA + AH2 + O2 = 5-hydroxyuridine(34) in tRNA + A + H2O. Catalyzes oxygen-dependent 5-hydroxyuridine (ho5U) modification at position 34 in tRNAs. This is tRNA uridine(34) hydroxylase from Shigella flexneri serotype 5b (strain 8401).